A 183-amino-acid chain; its full sequence is Probable adenylyl-sulfate kinase (183 aa).

17 to 24 (GLPGSGKT) contacts ATP. Ser-91 functions as the Phosphoserine intermediate in the catalytic mechanism.

The protein belongs to the APS kinase family.

It catalyses the reaction adenosine 5'-phosphosulfate + ATP = 3'-phosphoadenylyl sulfate + ADP + H(+). The protein operates within sulfur metabolism; hydrogen sulfide biosynthesis; sulfite from sulfate: step 2/3. In terms of biological role, catalyzes the synthesis of activated sulfate. The chain is Probable adenylyl-sulfate kinase (cysC) from Aeropyrum pernix (strain ATCC 700893 / DSM 11879 / JCM 9820 / NBRC 100138 / K1).